The following is a 100-amino-acid chain: Small ribosomal subunit protein uS14c (100 aa).

This sequence belongs to the universal ribosomal protein uS14 family. As to quaternary structure, part of the 30S ribosomal subunit.

It localises to the plastid. The protein localises to the chloroplast. In terms of biological role, binds 16S rRNA, required for the assembly of 30S particles. This Fagopyrum esculentum subsp. ancestrale (Wild buckwheat) protein is Small ribosomal subunit protein uS14c.